The chain runs to 520 residues: Ribonuclease Y (520 aa).

A helical transmembrane segment spans residues 3–23; that stretch reads IELAIIFIVLAAGAGFLIGNL. Positions 210–273 constitute a KH domain; that stretch reads TVSVVALPSD…EVAKIALEKL (64 aa). An HD domain is found at 336 to 429; that stretch reads VYQHSLEVAF…VQAADALSGA (94 aa).

Belongs to the RNase Y family.

It is found in the cell membrane. In terms of biological role, endoribonuclease that initiates mRNA decay. The chain is Ribonuclease Y from Geobacter sulfurreducens (strain ATCC 51573 / DSM 12127 / PCA).